Consider the following 448-residue polypeptide: Inositol polyphosphate 5-phosphatase K (448 aa).

The segment at 16-318 (IHVVTWNVAS…SDHKPVSGTF (303 aa)) is catalytic. Residues 318 to 448 (FDLELKPLVS…DPLGEAQPQI (131 aa)) are required for interaction with GPR78 and PAK1. A required for ruffle localization region spans residues 321-448 (ELKPLVSAPL…DPLGEAQPQI (128 aa)).

It belongs to the inositol 1,4,5-trisphosphate 5-phosphatase type II family. In terms of assembly, interacts with GPR78; necessary for INPP5K localization at the endoplasmic reticulum. Interacts with PAK1; competes with GPR78. Ubiquitously expressed with highest levels in skeletal muscle, heart and kidney.

The protein localises to the endoplasmic reticulum. Its subcellular location is the cytoplasm. The enzyme catalyses 1D-myo-inositol 1,4,5-trisphosphate + H2O = 1D-myo-inositol 1,4-bisphosphate + phosphate. It catalyses the reaction 1D-myo-inositol 1,3,4,5-tetrakisphosphate + H2O = 1D-myo-inositol 1,3,4-trisphosphate + phosphate. It carries out the reaction a 1,2-diacyl-sn-glycero-3-phospho-(1D-myo-inositol-4,5-bisphosphate) + H2O = a 1,2-diacyl-sn-glycero-3-phospho-(1D-myo-inositol 4-phosphate) + phosphate. The catalysed reaction is a 1,2-diacyl-sn-glycero-3-phospho-(1D-myo-inositol-3,4,5-trisphosphate) + H2O = a 1,2-diacyl-sn-glycero-3-phospho-(1D-myo-inositol-3,4-bisphosphate) + phosphate. The enzyme catalyses 1,2-dioctanoyl-sn-glycero-3-phospho-(1D-myo-inositol-3,4,5-trisphosphate) + H2O = 1,2-dioctanoyl-sn-glycero-3-phospho-(1D-myo-inositol-3,4-bisphosphate) + phosphate. Functionally, inositol 5-phosphatase which acts on inositol 1,4,5-trisphosphate, inositol 1,3,4,5-tetrakisphosphate, phosphatidylinositol 4,5-bisphosphate and phosphatidylinositol 3,4,5-trisphosphate. Has 6-fold higher affinity for phosphatidylinositol 4,5-bisphosphate than for inositol 1,4,5-trisphosphate. Negatively regulates assembly of the actin cytoskeleton. Controls insulin-dependent glucose uptake among inositol 3,4,5-trisphosphate phosphatases; therefore, is the specific regulator for insulin signaling in skeletal muscle. The protein is Inositol polyphosphate 5-phosphatase K of Homo sapiens (Human).